The primary structure comprises 295 residues: UDP-N-acetylenolpyruvoylglucosamine reductase (295 aa).

The region spanning 23 to 188 (QVGGPADFLA…ISAKFALKPG (166 aa)) is the FAD-binding PCMH-type domain. R167 is a catalytic residue. S217 (proton donor) is an active-site residue. Residue E287 is part of the active site.

Belongs to the MurB family. The cofactor is FAD.

The protein localises to the cytoplasm. It catalyses the reaction UDP-N-acetyl-alpha-D-muramate + NADP(+) = UDP-N-acetyl-3-O-(1-carboxyvinyl)-alpha-D-glucosamine + NADPH + H(+). It participates in cell wall biogenesis; peptidoglycan biosynthesis. In terms of biological role, cell wall formation. The sequence is that of UDP-N-acetylenolpyruvoylglucosamine reductase from Streptococcus equi subsp. zooepidemicus (strain H70).